A 269-amino-acid polypeptide reads, in one-letter code: Putative pyridoxine kinase (269 aa).

N139 lines the ATP pocket. Position 142 (E142) interacts with Mg(2+). Residues K176–R180, D189, V205, G214, and K239 each bind ATP.

It belongs to the ThiD family.

It catalyses the reaction pyridoxal + ATP = pyridoxal 5'-phosphate + ADP + H(+). Its function is as follows. Phosphorylates B6 vitamers; functions in a salvage pathway. Uses pyridoxal, pyridoxine, and pyridoxamine as substrates. This Treponema pallidum (strain Nichols) protein is Putative pyridoxine kinase (pdxK).